The sequence spans 180 residues: Large ribosomal subunit protein uL6 (180 aa).

This sequence belongs to the universal ribosomal protein uL6 family. In terms of assembly, part of the 50S ribosomal subunit.

This protein binds to the 23S rRNA, and is important in its secondary structure. It is located near the subunit interface in the base of the L7/L12 stalk, and near the tRNA binding site of the peptidyltransferase center. This chain is Large ribosomal subunit protein uL6, found in Anaeromyxobacter sp. (strain Fw109-5).